Reading from the N-terminus, the 291-residue chain is Meteorin (291 aa).

Residues 1–21 (MLVAALLCALCCGLLAASARA) form the signal peptide. Disulfide bonds link C28-C49, C80-C116, C169-C240, C172-C264, and C182-C286.

It belongs to the meteorin family. In terms of assembly, monomer.

The protein localises to the secreted. Its function is as follows. Involved in both glial cell differentiation and axonal network formation during neurogenesis. Promotes astrocyte differentiation and transforms cerebellar astrocytes into radial glia. Also induces axonal extension in small and intermediate neurons of sensory ganglia by activating nearby satellite glia. In Rattus norvegicus (Rat), this protein is Meteorin (Metrn).